The primary structure comprises 433 residues: MYPGRAKPTYNNQQAQQAQSQVGYQTGYSNAQPQQQYYTAPQQQNVSGSSMSFQHQFYPPPNQSPPQYNTGQYARPAAPPPGQQNYRNDIQQNHASGTVNGPSGYQQPQAMYKPPSQVQHTGPNNQVAYQYSQCTGRRKALLIGINYFGSANELRGCINDSHNMFNFLTQRYGYKAEDIVMLNDDTTDPVRVPTKANMLRAMQWLVKDARPNDALFFHYSGHGGQTEDLDGDEEDGMDDVIYPVDFQMAGHIVDDDMHAIMVSPLQPGVRLTALFDSCHSGTVLDLPYTYSTKGVIKEPNMWKDVGSSGLQAAMAYATGNTTSLVSSLGNVFTTITKSNNNVDRERVKQIKFSPADVIMFSGSKDNQTSADATENGQNTGAMSWAFLTVLSKQPQQSYLSLLQNMRAELSSKYTQKPQLSCSHEIDTNLQFLL.

The tract at residues 1–123 (MYPGRAKPTY…PPSQVQHTGP (123 aa)) is disordered. Residues 9–44 (TYNNQQAQQAQSQVGYQTGYSNAQPQQQYYTAPQQQ) show a composition bias toward low complexity. Composition is skewed to polar residues over residues 45 to 55 (NVSGSSMSFQH) and 83 to 109 (QQNY…QQPQ). Catalysis depends on residues His-222 and Cys-278.

This sequence belongs to the peptidase C14B family.

Involved in cell death (apoptosis). In Kluyveromyces lactis (strain ATCC 8585 / CBS 2359 / DSM 70799 / NBRC 1267 / NRRL Y-1140 / WM37) (Yeast), this protein is Metacaspase-1 (MCA1).